The sequence spans 706 residues: UvrABC system protein C (706 aa).

In terms of domain architecture, GIY-YIG spans 16-95 (VEPGVYRFRD…IKEFDPRFNV (80 aa)). A UVR domain is found at 208–243 (DRLAKDMEQQMTAAAEQLDFERAARLRDDISALKRA). The tract at residues 651 to 706 (APQNGTAPDPAPGTGDPQTPADPHSAATAADIEDDRHATGATGPQMNGSEQQVDRV) is disordered. A compositionally biased stretch (polar residues) spans 692–706 (TGPQMNGSEQQVDRV).

Belongs to the UvrC family. In terms of assembly, interacts with UvrB in an incision complex.

The protein resides in the cytoplasm. The UvrABC repair system catalyzes the recognition and processing of DNA lesions. UvrC both incises the 5' and 3' sides of the lesion. The N-terminal half is responsible for the 3' incision and the C-terminal half is responsible for the 5' incision. This is UvrABC system protein C from Mycolicibacterium smegmatis (strain ATCC 700084 / mc(2)155) (Mycobacterium smegmatis).